A 365-amino-acid polypeptide reads, in one-letter code: tRNA N6-adenosine threonylcarbamoyltransferase (365 aa).

Residues histidine 119 and histidine 123 each contribute to the Fe cation site. Residues 141–145, aspartate 174, glycine 187, and asparagine 288 contribute to the substrate site; that span reads LVSGG. Aspartate 316 serves as a coordination point for Fe cation.

This sequence belongs to the KAE1 / TsaD family. Fe(2+) serves as cofactor.

The protein resides in the cytoplasm. It carries out the reaction L-threonylcarbamoyladenylate + adenosine(37) in tRNA = N(6)-L-threonylcarbamoyladenosine(37) in tRNA + AMP + H(+). Required for the formation of a threonylcarbamoyl group on adenosine at position 37 (t(6)A37) in tRNAs that read codons beginning with adenine. Is involved in the transfer of the threonylcarbamoyl moiety of threonylcarbamoyl-AMP (TC-AMP) to the N6 group of A37, together with TsaE and TsaB. TsaD likely plays a direct catalytic role in this reaction. The polypeptide is tRNA N6-adenosine threonylcarbamoyltransferase (Rhizobium leguminosarum bv. trifolii (strain WSM2304)).